Consider the following 339-residue polypeptide: MSNEGSREESREPEAREGKSDEIFEVEKILAHKVTDNLLVLQVRWLGYGADEDTWEPEEDLQECASEVVAEYYKKLKVTDKTELIELLQKQIKKNKSQKSKKRSKTVSDHESNHDSDGSYGTPKTSKKSKKSAKNETPVSSKVPKVPTKAALKSYEATVSGPVAPNNAKKAAMEVRDTRRNWLDEESSDDEAETTAPLSDVEKIASKVKVVKAVEEKAEEPVKRPSTPPKPREVVIKKDPSESPVASASSVIPTSKRKSINAETSNGRQRTLAPPVIVKDETTWTVDGIARHTDVDNTKTKLILMTNSATGERKVVEGREAFELDGWALAKYLLDRCEF.

The tract at residues 1 to 21 (MSNEGSREESREPEAREGKSD) is disordered. The region spanning 24–84 (FEVEKILAHK…KLKVTDKTEL (61 aa)) is the Chromo domain. The segment covering 91-105 (QIKKNKSQKSKKRSK) has biased composition (basic residues). Disordered stretches follow at residues 91–199 (QIKK…APLS) and 215–272 (EEKA…QRTL). Composition is skewed to basic and acidic residues over residues 106-117 (TVSDHESNHDSD) and 171-183 (AAMEVRDTRRNWL). Over residues 184–193 (DEESSDDEAE) the composition is skewed to acidic residues. Basic and acidic residues predominate over residues 230–241 (KPREVVIKKDPS). The segment covering 242 to 251 (ESPVASASSV) has biased composition (low complexity).

In terms of tissue distribution, expressed in every cell of the embryo (at protein level). In adults, expressed predominantly in the head region and the germline.

The protein resides in the chromosome. It localises to the nucleus. Its function is as follows. Specifically recognizes and binds methylated 'Lys-9' of histone H3 (H3K9me), with highest preference for trimethylated 'Lys-9' (H3K9me3) followed by dimethylated 'Lys-9' (H3K9me2) followed by monomethylated 'Lys-9' (H3K9me1). Plays a role in maintaining correct unc-4 expression in the VC motor neurons where unc-4 is expressed in the vulval but not in the non-vulval VC neurons. This chain is Chromo domain-containing protein cec-3 (cec-3), found in Caenorhabditis elegans.